The following is an 83-amino-acid chain: Mitotic-spindle organizing protein 1 (83 aa).

It belongs to the MOZART1 family. As to quaternary structure, part of the gamma-tubulin complex.

It is found in the cytoplasm. It localises to the cytoskeleton. Its subcellular location is the microtubule organizing center. The protein localises to the spindle pole body. In terms of biological role, required for gamma-tubulin complex recruitment to the microtubule organizing center (MTOC). In Botryotinia fuckeliana (strain B05.10) (Noble rot fungus), this protein is Mitotic-spindle organizing protein 1.